Here is a 120-residue protein sequence, read N- to C-terminus: Large ribosomal subunit protein uL18 (120 aa).

The segment at 1–25 is disordered; the sequence is MKQTRTAARQSRHQRIRRKVKGTSD. A compositionally biased stretch (basic residues) spans 10 to 21; that stretch reads QSRHQRIRRKVK.

It belongs to the universal ribosomal protein uL18 family. In terms of assembly, part of the 50S ribosomal subunit; part of the 5S rRNA/L5/L18/L25 subcomplex. Contacts the 5S and 23S rRNAs.

Functionally, this is one of the proteins that bind and probably mediate the attachment of the 5S RNA into the large ribosomal subunit, where it forms part of the central protuberance. The chain is Large ribosomal subunit protein uL18 from Thermosynechococcus vestitus (strain NIES-2133 / IAM M-273 / BP-1).